The chain runs to 245 residues: Lytic switch protein BZLF1 (245 aa).

Residues 1 to 167 are transactivation; it reads MMDPNSTSED…RTRKPLQPES (167 aa). Phosphothreonine is present on residues Thr14 and Thr159. The interval 140–167 is disordered; it reads QLADIGAPQPAPAAAPARRTRKPLQPES. The Bipartite nuclear localization signal motif lies at 157-194; that stretch reads RRTRKPLQPESLEECDSELDIKRYKNRVASRKCRAKFK. Residues Ser167, Ser173, and Ser186 each carry the phosphoserine modification. Residues 178–195 are basic motif; it reads KRYKNRVASRKCRAKFKH. A bZIP domain is found at 178–228; it reads KRYKNRVASRKCRAKFKHLLQHYREVASAKSSENDRLRLLLKQMCPSLDVD. The interval 196–228 is leucine-zipper; the sequence is LLQHYREVASAKSSENDRLRLLLKQMCPSLDVD. The segment at 229–245 is accessory activation domain; sequence SIIPRTPDVLHEDLLNF.

It belongs to the bZIP family. As to quaternary structure, homodimer. Interacts (via b-ZIP domain) with the DNA polymerase processivity factor BMRF1 (via N-terminus); this interaction may inhibit BZLF1-induced transcription of the BMRF1 promoter. Interacts with human UBN1, CRTC2 and RACK1. Interacts (via N-terminus) with human PAX5 (via N-terminus); this interaction inhibits BZLF1-mediated lytic viral reactivation. Interacts (via leucine-zipper domain) with host CEBPA; this interaction induces G1 host cell cycle arrest. Interacts (via C-terminus) with host TP53BP1 (via C-terminus); this interaction is involved in the activation of the viral lytic cycle. Interacts with host chromatin-remodeling ATPase INO80; this interaction participates to the activation of early lytic viral genes by BZLF1. Interacts with host regulator of chromatin SMARCA5/hSNF2H; this interaction participates to the activation of early lytic viral genes by BZLF1. Interacts with host PLSCR1/Phospholipid scramblase 1; this interaction negatively regulates the transcriptional regulatory activity of BZLF1 by preventing the formation of the BZLF1-CBP complex.

The protein localises to the host nucleus. Its function is as follows. Transcription factor that acts as a molecular switch to induce the transition from the latent to the lytic or productive phase of the virus cycle. Mediates the switch from the latent to the lytic cycle of infection in cells containing a highly methylated viral genome. Probably binds to silenced chromatin and recruits host chromatin-remodeling enzymes. Regulates this switch by binding to 2 types of ZEBRA response elements (ZREs): the CpG-free AP-1 like elements (latency) and the methylated CpG-containing elements (lytic replication). Activates preferentially the methylated forms of the viral lytic R (BRLF1) and Na (BRRF1) gene promoters, the latters being the first genes activated during Z-mediated reactivation in latently infected cells. BZLF1 and BRLF1 act together to trigger lytic replication. Also binds the lytic origin of replication, oriLyt. Induces G1 cell cycle arrest by stabilizing the host CCAAT/enhancer binding protein CEBPA. This function is important because the lytic cycle preferentially takes place in host cells arrested in G1. The polypeptide is Lytic switch protein BZLF1 (Epstein-Barr virus (strain AG876) (HHV-4)).